A 263-amino-acid chain; its full sequence is Probable methylthioribulose-1-phosphate dehydratase (263 aa).

Cys102 is a substrate binding site. Residues His120 and His122 each contribute to the Zn(2+) site. The active-site Proton donor/acceptor is the Glu144. His200 provides a ligand contact to Zn(2+).

Belongs to the aldolase class II family. MtnB subfamily. Requires Zn(2+) as cofactor.

The protein localises to the cytoplasm. The enzyme catalyses 5-(methylsulfanyl)-D-ribulose 1-phosphate = 5-methylsulfanyl-2,3-dioxopentyl phosphate + H2O. It participates in amino-acid biosynthesis; L-methionine biosynthesis via salvage pathway; L-methionine from S-methyl-5-thio-alpha-D-ribose 1-phosphate: step 2/6. Catalyzes the dehydration of methylthioribulose-1-phosphate (MTRu-1-P) into 2,3-diketo-5-methylthiopentyl-1-phosphate (DK-MTP-1-P). The protein is Probable methylthioribulose-1-phosphate dehydratase of Caenorhabditis elegans.